Here is a 594-residue protein sequence, read N- to C-terminus: (-)-endo-fenchol synthase, chloroplastic (594 aa).

Residues 1–50 constitute a chloroplast transit peptide; the sequence is MSSLVMHVGIVNKPAITYLPTLSRSASNLHNVSSTRLQTSCSLQLDYKPV. 4 residues coordinate Mg(2+): Asp-348, Asp-352, Asp-492, and Glu-500. The short motif at 348-352 is the DDXXD motif element; that stretch reads DDIYD.

The protein belongs to the terpene synthase family. Tpsa subfamily. Mg(2+) serves as cofactor. Mn(2+) is required as a cofactor. In terms of tissue distribution, expressed at high levels in leaves.

The protein localises to the plastid. It localises to the chloroplast. The enzyme catalyses (2E)-geranyl diphosphate = alpha-pinene + diphosphate. The catalysed reaction is (2E)-geranyl diphosphate + H2O = (1S,2S,4R)-endo-fenchol + diphosphate. It carries out the reaction (2E)-geranyl diphosphate = limonene + diphosphate. It functions in the pathway secondary metabolite biosynthesis; terpenoid biosynthesis. Its function is as follows. Monoterpene synthase involved in the biosynthesis of volatile compounds widely used in aromatherapy and folk medicine, and present in culinary herbs. Mediates the conversion of (2E)-geranyl diphosphate (GPP) into alpha fenchol, limonene and alpha-pinene and, as minor compounds, into beta-myrcene, alpha-terpinolene and alpha-phellandrene. The polypeptide is (-)-endo-fenchol synthase, chloroplastic (Lavandula pedunculata subsp. lusitanica (French lavender)).